Consider the following 386-residue polypeptide: SWI/SNF-related matrix-associated actin-dependent regulator of chromatin subfamily B member 1 (386 aa).

A DNA-binding region spans residues 1-114; that stretch reads MMMMALSKTF…DEKYKAVSIS (114 aa).

The protein belongs to the SNF5 family. In terms of assembly, component of the multiprotein chromatin-remodeling complexes SWI/SNF. Component of neural progenitors-specific chromatin remodeling complex (npBAF complex) and the neuron-specific chromatin remodeling complex (nBAF complex). Component of the BAF (SWI/SNF) chromatin remodeling complex. Component of the SWI/SNF-B (PBAF) chromatin remodeling complex. Binds to double-stranded DNA.

Its subcellular location is the nucleus. In terms of biological role, involved in chromatin-remodeling. Core component of the BAF (SWI/SNF) complex. This ATP-dependent chromatin-remodeling complex plays important roles in cell proliferation and differentiation, in cellular antiviral activities and inhibition of tumor formation. Belongs to the neural progenitors-specific chromatin remodeling complex (npBAF complex) and the neuron-specific chromatin remodeling complex (nBAF complex) and may play a role in neural development. In Gallus gallus (Chicken), this protein is SWI/SNF-related matrix-associated actin-dependent regulator of chromatin subfamily B member 1 (SMARCB1).